We begin with the raw amino-acid sequence, 101 residues long: uncharacterized protein (101 aa).

Residues 1-24 (MILMFRMNKGMSFITLLFSLALFS) form the signal peptide.

This is an uncharacterized protein from Haemophilus influenzae (strain ATCC 51907 / DSM 11121 / KW20 / Rd).